The following is a 272-amino-acid chain: 2-succinyl-6-hydroxy-2,4-cyclohexadiene-1-carboxylate synthase (272 aa).

It belongs to the AB hydrolase superfamily. MenH family. As to quaternary structure, monomer.

It carries out the reaction 5-enolpyruvoyl-6-hydroxy-2-succinyl-cyclohex-3-ene-1-carboxylate = (1R,6R)-6-hydroxy-2-succinyl-cyclohexa-2,4-diene-1-carboxylate + pyruvate. It functions in the pathway quinol/quinone metabolism; 1,4-dihydroxy-2-naphthoate biosynthesis; 1,4-dihydroxy-2-naphthoate from chorismate: step 3/7. It participates in quinol/quinone metabolism; menaquinone biosynthesis. Functionally, catalyzes a proton abstraction reaction that results in 2,5-elimination of pyruvate from 2-succinyl-5-enolpyruvyl-6-hydroxy-3-cyclohexene-1-carboxylate (SEPHCHC) and the formation of 2-succinyl-6-hydroxy-2,4-cyclohexadiene-1-carboxylate (SHCHC). This chain is 2-succinyl-6-hydroxy-2,4-cyclohexadiene-1-carboxylate synthase, found in Yersinia pestis (strain Pestoides F).